A 130-amino-acid polypeptide reads, in one-letter code: Albumin-1 F (130 aa).

A signal peptide spans 1 to 26 (MASVKLASLIVLFATLGMFLTKNVGA). Disulfide bonds link C29–C46, C33–C48, and C41–C58. 2 propeptides span residues 64–69 (VFLRTN) and 123–130 (LLKSVSTA).

In terms of processing, the C-terminal glycine may be removed from PA1b.

Functionally, PA1b binds to basic 7S globulin (BG) and stimulates its phosphorylation activity. Involved in the signal transduction system to regulate the growth and differentiation as a hormone peptide. Toxic to various insects through binding to a high affinity binding site in the insect gut. The protein is Albumin-1 F of Pisum sativum (Garden pea).